A 663-amino-acid polypeptide reads, in one-letter code: DNA ligase (663 aa).

NAD(+) is bound by residues 31 to 35, 80 to 81, and Glu109; these read DYEYD and SL. The N6-AMP-lysine intermediate role is filled by Lys111. NAD(+)-binding residues include Arg132, Glu167, Lys283, and Lys307. 4 residues coordinate Zn(2+): Cys401, Cys404, Cys419, and Cys424. One can recognise a BRCT domain in the interval 586-663; that stretch reads KIDNRFLGKT…TEEDLKDMIK (78 aa).

Belongs to the NAD-dependent DNA ligase family. LigA subfamily. The cofactor is Mg(2+). Mn(2+) serves as cofactor.

The enzyme catalyses NAD(+) + (deoxyribonucleotide)n-3'-hydroxyl + 5'-phospho-(deoxyribonucleotide)m = (deoxyribonucleotide)n+m + AMP + beta-nicotinamide D-nucleotide.. Its function is as follows. DNA ligase that catalyzes the formation of phosphodiester linkages between 5'-phosphoryl and 3'-hydroxyl groups in double-stranded DNA using NAD as a coenzyme and as the energy source for the reaction. It is essential for DNA replication and repair of damaged DNA. This Clostridium kluyveri (strain NBRC 12016) protein is DNA ligase.